The sequence spans 485 residues: Chitin synthase regulator 2 (485 aa).

7 Sel1-like repeats span residues 164 to 202 (PDAQ…KHGH), 203 to 238 (PDAC…VGLH), 239 to 275 (PGAM…EHAT), 279 to 316 (PHAL…ELGY), 317 to 353 (APSA…QQDH), 354 to 391 (KDAC…ELGL), and 392 to 427 (AKAQ…EGGD). Positions 460-485 (AANLAQRSGSGSGASGKDGKDGCLIM) are disordered. Over residues 476-485 (KDGKDGCLIM) the composition is skewed to basic and acidic residues. A Cysteine methyl ester modification is found at cysteine 482. Residue cysteine 482 is the site of S-farnesyl cysteine attachment. The propeptide at 483–485 (LIM) is removed in mature form.

Belongs to the SKT5 family.

The protein resides in the cell membrane. Activator of the chitin synthase CHS3 which polymerizes chitin, a structural polymer of the fungal cell wall. Chitin produced by CHS3 is deacetylated to chitosan, which helps to maintain cell wall integrity, anchor melanin, and offers an advantage during infection, as chitosan is less readily detected by host immunosurveillance. The chain is Chitin synthase regulator 2 from Cryptococcus neoformans var. grubii serotype A (strain H99 / ATCC 208821 / CBS 10515 / FGSC 9487) (Filobasidiella neoformans var. grubii).